An 82-amino-acid polypeptide reads, in one-letter code: Large ribosomal subunit protein bL31B (82 aa).

This sequence belongs to the bacterial ribosomal protein bL31 family. Type B subfamily. In terms of assembly, part of the 50S ribosomal subunit after the end of exponential growth.

In terms of biological role, while neither of the L31 paralogs is essential, this protein does not seem to function as the main L31 protein. Has a higher affinity for 70S ribosomes than the zinc-containing L31 paralog; is able to displace it to varying extents, even under zinc-replete conditions. This Bacillus subtilis (strain 168) protein is Large ribosomal subunit protein bL31B (rpmE2).